Consider the following 99-residue polypeptide: uncharacterized protein (99 aa).

Residues 43-95 are a coiled coil; the sequence is ENEEIYADQVRRIKLRLRELRETYATSEDNWRELMDNLEELRDQIERLAIRGG.

This is an uncharacterized protein from Archaeoglobus fulgidus (strain ATCC 49558 / DSM 4304 / JCM 9628 / NBRC 100126 / VC-16).